Reading from the N-terminus, the 263-residue chain is Type-2Bb cytolytic delta-endotoxin (263 aa).

The protein belongs to the cyt1/cyt2 endotoxin family. In terms of processing, active after proteolytic processing.

Its function is as follows. Kills the larvae of dipteran insects by making pores in the epithelial cell membrane of the insect midgut. The sequence is that of Type-2Bb cytolytic delta-endotoxin (cyt2Bb1) from Bacillus thuringiensis subsp. jegathesan.